The primary structure comprises 205 residues: LexA repressor (205 aa).

Residues 28 to 48 (RAEIATRLGFKSANAAEEHLK) constitute a DNA-binding region (H-T-H motif). Catalysis depends on for autocatalytic cleavage activity residues serine 122 and lysine 159.

It belongs to the peptidase S24 family. As to quaternary structure, homodimer.

The enzyme catalyses Hydrolysis of Ala-|-Gly bond in repressor LexA.. Represses a number of genes involved in the response to DNA damage (SOS response), including recA and lexA. In the presence of single-stranded DNA, RecA interacts with LexA causing an autocatalytic cleavage which disrupts the DNA-binding part of LexA, leading to derepression of the SOS regulon and eventually DNA repair. In Shewanella denitrificans (strain OS217 / ATCC BAA-1090 / DSM 15013), this protein is LexA repressor.